The chain runs to 681 residues: Endopolyphosphatase (681 aa).

Residues 1 to 23 (MKELQLPEKRKSNTGLSWFPSPR) lie on the Cytoplasmic side of the membrane. A helical; Signal-anchor for type II membrane protein transmembrane segment spans residues 24–44 (ILQVFLVLLGAIVAFLSFSAT). At 45-681 (SSIISSSPKH…RAFCSSGYED (637 aa)) the chain is on the vacuolar side. N-linked (GlcNAc...) asparagine glycans are attached at residues Asn127, Asn173, Asn309, and Asn487. Basic residues predominate over residues 549–562 (KKKKKGKKGKKNKN). Residues 549–585 (KKKKKGKKGKKNKNSKNWWKTDKTFPKKKPKNLPPGP) are disordered.

This sequence belongs to the endopolyphosphatase PPN1 family. A divalent metal cation serves as cofactor. In terms of processing, processing by proteases in the vacuole may be required for activation.

Its subcellular location is the vacuole membrane. The catalysed reaction is [phosphate](n+1) + n H2O = (n+1) phosphate + n H(+). In terms of biological role, catalyzes the hydrolysis of inorganic polyphosphate (polyP) chains of many hundreds of phosphate residues into shorter lengths. This is Endopolyphosphatase (PPN1) from Kluyveromyces lactis (strain ATCC 8585 / CBS 2359 / DSM 70799 / NBRC 1267 / NRRL Y-1140 / WM37) (Yeast).